The chain runs to 448 residues: Hyaluronidase conohyal-Cn1 (448 aa).

A signal peptide spans 1-18 (MRAVVVVTGLVVVVVATA). Residues 19-33 (LSLPNHDVKSATSSR) constitute a propeptide that is removed on maturation. Residues 26 to 55 (VKSATSSRSSSDYQGSSGDDCDEGLPPPDQ) are disordered. The segment covering 31–43 (SSRSSSDYQGSSG) has biased composition (low complexity). Residues Cys67 and Cys344 are joined by a disulfide bond. N-linked (GlcNAc...) asparagine glycosylation is present at Asn141. Catalysis depends on Glu151, which acts as the Proton donor. 2 N-linked (GlcNAc...) asparagine glycosylation sites follow: Asn169 and Asn361. 3 disulfides stabilise this stretch: Cys369–Cys380, Cys374–Cys413, and Cys415–Cys424. One can recognise an EGF-like domain in the interval 413–424 (CRCYSAWEGACC).

This sequence belongs to the glycosyl hydrolase 56 family. As to expression, expressed by the venom duct.

The protein resides in the secreted. It carries out the reaction Random hydrolysis of (1-&gt;4)-linkages between N-acetyl-beta-D-glucosamine and D-glucuronate residues in hyaluronate.. Hyaluronidase catalyzes the hydrolysis of hyaluronic acid (HA), an anionic, nonsulfated glycosaminoglycan distributed widely throughout connective, epithelial, and neural tissues. In venom, they are known to enhance diffusion of the venom by degrading the extracellular matrix. The sequence is that of Hyaluronidase conohyal-Cn1 from Conus consors (Singed cone).